Consider the following 94-residue polypeptide: Evasin P1104 (94 aa).

Positions 1 to 28 (MASNLFTIFQLAGFVAIVFIVNLHSVSA) are cleaved as a signal peptide. 3 disulfides stabilise this stretch: C48–C66, C52–C68, and C62–C79. A glycan (N-linked (GlcNAc...) asparagine) is linked at N51.

Its subcellular location is the secreted. In terms of biological role, salivary chemokine-binding protein which binds to host chemokines CXCL1, CXCL2, CXCL3, CXCL5, CXCL6, CXCL12 and CXCL13. The chain is Evasin P1104 from Ixodes ricinus (Common tick).